The primary structure comprises 297 residues: Homoserine kinase (297 aa).

85–95 (PPTRGMGSSSA) serves as a coordination point for ATP.

The protein belongs to the GHMP kinase family. Homoserine kinase subfamily.

It localises to the cytoplasm. The enzyme catalyses L-homoserine + ATP = O-phospho-L-homoserine + ADP + H(+). It functions in the pathway amino-acid biosynthesis; L-threonine biosynthesis; L-threonine from L-aspartate: step 4/5. Its function is as follows. Catalyzes the ATP-dependent phosphorylation of L-homoserine to L-homoserine phosphate. This is Homoserine kinase from Desulfitobacterium hafniense (strain DSM 10664 / DCB-2).